The sequence spans 360 residues: Phospho-N-acetylmuramoyl-pentapeptide-transferase (360 aa).

10 helical membrane passes run 2-22 (IAIL…TPLF), 52-72 (MGGV…NISA), 80-100 (GLLL…DDFI), 114-134 (WKII…LQFP), 156-176 (LAFA…NFLI), 189-209 (LDGL…VVTM), 235-255 (LAIV…WNAS), 259-279 (IFMG…LSIL), 284-304 (FLAV…VIQI), and 338-358 (FWLI…AEWV).

It belongs to the glycosyltransferase 4 family. MraY subfamily. Mg(2+) is required as a cofactor.

The protein resides in the cell membrane. It catalyses the reaction UDP-N-acetyl-alpha-D-muramoyl-L-alanyl-gamma-D-glutamyl-meso-2,6-diaminopimeloyl-D-alanyl-D-alanine + di-trans,octa-cis-undecaprenyl phosphate = di-trans,octa-cis-undecaprenyl diphospho-N-acetyl-alpha-D-muramoyl-L-alanyl-D-glutamyl-meso-2,6-diaminopimeloyl-D-alanyl-D-alanine + UMP. The protein operates within cell wall biogenesis; peptidoglycan biosynthesis. In terms of biological role, catalyzes the initial step of the lipid cycle reactions in the biosynthesis of the cell wall peptidoglycan: transfers peptidoglycan precursor phospho-MurNAc-pentapeptide from UDP-MurNAc-pentapeptide onto the lipid carrier undecaprenyl phosphate, yielding undecaprenyl-pyrophosphoryl-MurNAc-pentapeptide, known as lipid I. In Beutenbergia cavernae (strain ATCC BAA-8 / DSM 12333 / CCUG 43141 / JCM 11478 / NBRC 16432 / NCIMB 13614 / HKI 0122), this protein is Phospho-N-acetylmuramoyl-pentapeptide-transferase.